The chain runs to 314 residues: Ribosomal RNA small subunit methyltransferase H (314 aa).

S-adenosyl-L-methionine-binding positions include 34 to 36, Asp53, Phe82, Asp103, and Gln110; that span reads GGH.

It belongs to the methyltransferase superfamily. RsmH family.

It is found in the cytoplasm. The enzyme catalyses cytidine(1402) in 16S rRNA + S-adenosyl-L-methionine = N(4)-methylcytidine(1402) in 16S rRNA + S-adenosyl-L-homocysteine + H(+). Functionally, specifically methylates the N4 position of cytidine in position 1402 (C1402) of 16S rRNA. The polypeptide is Ribosomal RNA small subunit methyltransferase H (Limosilactobacillus fermentum (strain NBRC 3956 / LMG 18251) (Lactobacillus fermentum)).